Consider the following 927-residue polypeptide: Non-lysosomal glucosylceramidase (927 aa).

The tract at residues 32–62 (EETGGTKDVQVTDCKSPEDSRPPKETDCCNP) is disordered. A compositionally biased stretch (basic and acidic residues) spans 46 to 58 (KSPEDSRPPKETD).

This sequence belongs to the non-lysosomal glucosylceramidase family. In terms of tissue distribution, widely expressed. Mainly expressed in brain, heart, skeletal muscle, kidney and placenta and expressed at lower levels in liver, spleen, small intestine and lung. Detectable in colon, thymus and peripheral blood leukocytes.

The protein resides in the endoplasmic reticulum membrane. It localises to the golgi apparatus membrane. It carries out the reaction a beta-D-glucosyl-(1&lt;-&gt;1')-N-acylsphing-4-enine + H2O = an N-acylsphing-4-enine + D-glucose. The catalysed reaction is a beta-D-galactosyl-(1&lt;-&gt;1')-N-acylsphing-4-enine + H2O = an N-acylsphing-4-enine + D-galactose. It catalyses the reaction beta-D-glucosyl-(1-&gt;3)-O-lithocholate + H2O = lithocholate + D-glucose. The enzyme catalyses beta-D-glucosyl-(1-&gt;3)-O-chenodeoxycholate + H2O = chenodeoxycholate + D-glucose. It carries out the reaction a di-trans,poly-cis-dolichyl beta-D-glucosyl phosphate + chenodeoxycholate = beta-D-glucosyl-(1-&gt;3)-O-chenodeoxycholate + a di-trans,poly-cis-dolichyl phosphate + H(+). The catalysed reaction is octyl beta-D-glucose + chenodeoxycholate = beta-D-glucosyl-(1-&gt;3)-O-chenodeoxycholate + octan-1-ol. It catalyses the reaction cholesteryl 3-beta-D-glucoside + H2O = cholesterol + D-glucose. The enzyme catalyses a beta-D-glucosyl-(1&lt;-&gt;1')-N-acylsphing-4-enine + cholesterol = cholesteryl 3-beta-D-glucoside + an N-acylsphing-4-enine. It carries out the reaction beta-D-glucosyl-N-(9Z-octadecenoyl)-sphing-4E-enine + cholesterol = N-(9Z-octadecenoyl)-sphing-4-enine + cholesteryl 3-beta-D-glucoside. The catalysed reaction is a beta-D-galactosyl-(1&lt;-&gt;1')-N-acylsphing-4-enine + cholesterol = cholesteryl 3-beta-D-galactoside + an N-acylsphing-4-enine. It catalyses the reaction 1-(beta-D-galactosyl)-N-dodecanoylsphing-4-enine + cholesterol = cholesteryl 3-beta-D-galactoside + N-dodecanoylsphing-4-enine. It functions in the pathway lipid metabolism; sphingolipid metabolism. Its pathway is steroid metabolism; cholesterol metabolism. Inhibited by AMP-DMN/N -((5-adamantane-1-yl-methoxy)pentyl)-deoxynojirimycin. Activated by Mn(2+), Co(2+) and Mg(2+) and inhibited by Zn(2+). Enzymatic activity is dependent on membrane association and requires the presence of lipids. The membrane-associated enzyme is not inhibited by condutiriol B epoxide and bromocondutiriol B epoxide. Its function is as follows. Non-lysosomal glucosylceramidase that catalyzes the hydrolysis of glucosylceramides/GlcCers (such as beta-D-glucosyl-(1&lt;-&gt;1')-N-acylsphing-4-enine) to free glucose and ceramides (such as N-acylsphing-4-enine). GlcCers are membrane glycosphingolipids that have a wide intracellular distribution. They are the main precursors of more complex glycosphingolipids that play a role in cellular growth, differentiation, adhesion, signaling, cytoskeletal dynamics and membrane properties. Involved in the transglucosylation of cholesterol, transfers glucose from GlcCer to cholesterol, thereby modifying its water solubility and biological properties. Under specific conditions, may catalyze the reverse reaction, transferring glucose from cholesteryl-3-beta-D-glucoside to ceramide (such as N-acylsphing-4-enine). May play a role in the metabolism of bile acids. Able to hydrolyze bile acid 3-O-glucosides as well as to produce bile acid-glucose conjugates thanks to a bile acid glucosyl transferase activity. Catalyzes the hydrolysis of galactosylceramides/GalCers (such as beta-D-galactosyl-(1&lt;-&gt;1')-N-acylsphing-4-enine), as well as the galactosyl transfer between GalCers and cholesterol in vitro with lower activity compared with their activity against GlcCers. This is Non-lysosomal glucosylceramidase from Homo sapiens (Human).